A 344-amino-acid polypeptide reads, in one-letter code: Phosphate acyltransferase (344 aa).

It belongs to the PlsX family. In terms of assembly, homodimer. Probably interacts with PlsY.

It is found in the cytoplasm. It carries out the reaction a fatty acyl-[ACP] + phosphate = an acyl phosphate + holo-[ACP]. Its pathway is lipid metabolism; phospholipid metabolism. In terms of biological role, catalyzes the reversible formation of acyl-phosphate (acyl-PO(4)) from acyl-[acyl-carrier-protein] (acyl-ACP). This enzyme utilizes acyl-ACP as fatty acyl donor, but not acyl-CoA. The sequence is that of Phosphate acyltransferase from Yersinia pestis bv. Antiqua (strain Antiqua).